The sequence spans 123 residues: MQDLIRSVQQEYMRSDLPPFSPGDTVRVHYRVVEGGNVRVQPFEGVVIRKRGGGTDATFTVRRVAAHGVGVERTFPLHSPLIEKIEVLRHGKVRRARLYYLRERAGKAARLKERRRPEGSYLR.

Belongs to the bacterial ribosomal protein bL19 family.

Functionally, this protein is located at the 30S-50S ribosomal subunit interface and may play a role in the structure and function of the aminoacyl-tRNA binding site. In Thermomicrobium roseum (strain ATCC 27502 / DSM 5159 / P-2), this protein is Large ribosomal subunit protein bL19.